A 382-amino-acid chain; its full sequence is Dual-specificity RNA methyltransferase RlmN (382 aa).

Glu95 functions as the Proton acceptor in the catalytic mechanism. One can recognise a Radical SAM core domain in the interval 101-347 (EDDRGTLCIS…TTVRKTRGDD (247 aa)). A disulfide bond links Cys108 and Cys352. Cys115, Cys119, and Cys122 together coordinate [4Fe-4S] cluster. S-adenosyl-L-methionine-binding positions include 178–179 (GE), Ser210, 232–234 (SLH), and Asn309. The active-site S-methylcysteine intermediate is Cys352.

It belongs to the radical SAM superfamily. RlmN family. The cofactor is [4Fe-4S] cluster.

It is found in the cytoplasm. The enzyme catalyses adenosine(2503) in 23S rRNA + 2 reduced [2Fe-2S]-[ferredoxin] + 2 S-adenosyl-L-methionine = 2-methyladenosine(2503) in 23S rRNA + 5'-deoxyadenosine + L-methionine + 2 oxidized [2Fe-2S]-[ferredoxin] + S-adenosyl-L-homocysteine. It carries out the reaction adenosine(37) in tRNA + 2 reduced [2Fe-2S]-[ferredoxin] + 2 S-adenosyl-L-methionine = 2-methyladenosine(37) in tRNA + 5'-deoxyadenosine + L-methionine + 2 oxidized [2Fe-2S]-[ferredoxin] + S-adenosyl-L-homocysteine. Specifically methylates position 2 of adenine 2503 in 23S rRNA and position 2 of adenine 37 in tRNAs. m2A2503 modification seems to play a crucial role in the proofreading step occurring at the peptidyl transferase center and thus would serve to optimize ribosomal fidelity. This is Dual-specificity RNA methyltransferase RlmN from Bordetella avium (strain 197N).